Reading from the N-terminus, the 178-residue chain is Caveolin-1 (178 aa).

Position 2 is an N-acetylserine (S2). S2 is subject to Phosphoserine. The tract at residues 2–94 (SGGKYVDSEG…WKASFTTFTV (93 aa)) is required for homooligomerization. The Cytoplasmic portion of the chain corresponds to 2 to 104 (SGGKYVDSEG…TKYWFYRLLS (103 aa)). N6-acetyllysine; alternate is present on K5. K5 participates in a covalent cross-link: Glycyl lysine isopeptide (Lys-Gly) (interchain with G-Cter in ubiquitin); alternate. Y6 is modified (phosphotyrosine). A Phosphoserine modification is found at S9. The residue at position 14 (Y14) is a Phosphotyrosine; by ABL1. Phosphotyrosine is present on Y25. Glycyl lysine isopeptide (Lys-Gly) (interchain with G-Cter in ubiquitin) cross-links involve residues K26, K39, K47, and K57. Positions 82–94 (DGIWKASFTTFTV) are interaction with CAVIN3. The segment at residues 105 to 125 (ALFGIPMALIWGIYFAILSFL) is an intramembrane region (helical). Over 126 to 178 (HIWAVVPCIKSFLIEIQCISRVYSIYVHTFCDPLFEAIGKIFSSIRINMQKEI) the chain is Cytoplasmic. The interacts with SPRY1, SPRY2, SPRY3 and SPRY4 stretch occupies residues 131–142 (VPCIKSFLIEIQ). 3 S-palmitoyl cysteine lipidation sites follow: C133, C143, and C156. Residues 149–160 (SIYVHTFCDPLF) are interacts with SPRY1, SPRY2, and SPRY4. The interval 167 to 178 (FSSIRINMQKEI) is interacts with SPRY1, SPRY2, SPRY3 and SPRY4.

It belongs to the caveolin family. In terms of assembly, homooligomer. Interacts with GLIPR2. Interacts with NOSTRIN. Interacts with SNAP25 and STX1A. Interacts (via the N-terminus) with DPP4; the interaction is direct. Interacts with CTNNB1, CDH1 and JUP. Interacts with PACSIN2; this interaction induces membrane tubulation. Interacts with SLC7A9. Interacts with BMX and BTK. Interacts with TGFBR1. Interacts with CAVIN3 (via leucine-zipper domain) in a cholesterol-sensitive manner. Interacts with CAVIN1. Interacts with EHD2 in a cholesterol-dependent manner. Forms a ternary complex with UBXN6 and VCP; mediates CAV1 targeting to lysosomes for degradation. Interacts with ABCG1; this interaction regulates ABCG1-mediated cholesterol efflux. Interacts with NEU3; this interaction enhances NEU3 sialidase activity within caveola. Interacts (via C-terminus) with SPRY1, SPRY2 (via C-terminus), SPRY3, and SPRY4. Interacts with IGFBP5; this interaction allows trafficking of IGFBP5 from the plasma membrane to the nucleus. Post-translationally, phosphorylated at Tyr-14 by ABL1 in response to oxidative stress. In terms of processing, ubiquitinated. Undergo monoubiquitination and multi- and/or polyubiquitination. Monoubiquitination of N-terminal lysines promotes integration in a ternary complex with UBXN6 and VCP which promotes oligomeric CAV1 targeting to lysosomes for degradation. Ubiquitinated by ZNRF1; leading to degradation and modulation of the TLR4-mediated immune response.

It localises to the golgi apparatus membrane. The protein localises to the cell membrane. Its subcellular location is the membrane. It is found in the caveola. The protein resides in the membrane raft. In terms of biological role, may act as a scaffolding protein within caveolar membranes. Forms a stable heterooligomeric complex with CAV2 that targets to lipid rafts and drives caveolae formation. Mediates the recruitment of CAVIN proteins (CAVIN1/2/3/4) to the caveolae. Interacts directly with G-protein alpha subunits and can functionally regulate their activity. Involved in the costimulatory signal essential for T-cell receptor (TCR)-mediated T-cell activation. Its binding to DPP4 induces T-cell proliferation and NF-kappa-B activation in a T-cell receptor/CD3-dependent manner. Recruits CTNNB1 to caveolar membranes and may regulate CTNNB1-mediated signaling through the Wnt pathway. Negatively regulates TGFB1-mediated activation of SMAD2/3 by mediating the internalization of TGFBR1 from membrane rafts leading to its subsequent degradation. Binds 20(S)-hydroxycholesterol (20(S)-OHC). The sequence is that of Caveolin-1 (CAV1) from Loxodonta africana (African elephant).